The following is a 506-amino-acid chain: Abscisic acid 8'-hydroxylase 2 (506 aa).

Residues 3-23 traverse the membrane as a helical segment; sequence FLLFFVFVTAAVLCFVVPAFL. Cysteine 437 is a heme binding site.

It belongs to the cytochrome P450 family. It depends on heme as a cofactor. As to expression, in internodes and expanding leaves. Weak expression in seedlings.

It is found in the membrane. The catalysed reaction is 2-cis-(+)-abscisate + reduced [NADPH--hemoprotein reductase] + O2 = (+)-8'-hydroxyabscisate + oxidized [NADPH--hemoprotein reductase] + H2O + H(+). It participates in plant hormone degradation; abscisic acid degradation. Its function is as follows. Involved in the oxidative degradation of abscisic acid. The chain is Abscisic acid 8'-hydroxylase 2 (CYP707A6) from Oryza sativa subsp. indica (Rice).